A 307-amino-acid polypeptide reads, in one-letter code: Elongation factor Ts (307 aa).

Positions 82 to 85 (TDFV) are involved in Mg(2+) ion dislocation from EF-Tu.

It belongs to the EF-Ts family.

The protein resides in the cytoplasm. In terms of biological role, associates with the EF-Tu.GDP complex and induces the exchange of GDP to GTP. It remains bound to the aminoacyl-tRNA.EF-Tu.GTP complex up to the GTP hydrolysis stage on the ribosome. The chain is Elongation factor Ts from Nautilia profundicola (strain ATCC BAA-1463 / DSM 18972 / AmH).